Consider the following 706-residue polypeptide: K(+)-insensitive pyrophosphate-energized proton pump (706 aa).

The next 5 helical transmembrane spans lie at 1–21, 62–82, 83–103, 129–149, and 164–184; these read MTAL…AIWA, VVIF…GFAI, GAIL…RANV, LLVA…LIHF, and VALG…GGIF. Residue Lys186 coordinates substrate. Asp189, Asp193, Asn216, and Asp219 together coordinate Mg(2+). 6 consecutive transmembrane segments (helical) span residues 231-251, 263-283, 300-320, 330-350, 393-413, and 414-434; these read LFET…IFFG, TLPL…TFFV, IATG…LIGF, GLAL…IIWI, IVII…GIAI, and ATTT…FGPV. Asp436 lines the Mg(2+) pocket. A run of 4 helical transmembrane segments spans residues 467–487, 516–536, 585–605, and 616–636; these read AVTK…LFAA, YVVV…AMGM, IIPS…IYAI, and AFSA…FVAI. 3 residues coordinate Ca(2+): Asp646, Asp672, and Asp676. Lys679 is a binding site for substrate. The chain crosses the membrane as a helical span at residues 685-705; the sequence is AVNPMIKITNIVALLLLAILA.

It belongs to the H(+)-translocating pyrophosphatase (TC 3.A.10) family. K(+)-insensitive subfamily. In terms of assembly, homodimer. Mg(2+) serves as cofactor.

Its subcellular location is the cell inner membrane. The catalysed reaction is diphosphate + H2O + H(+)(in) = 2 phosphate + 2 H(+)(out). Its function is as follows. Proton pump that utilizes the energy of pyrophosphate hydrolysis as the driving force for proton movement across the membrane. Generates a proton motive force. This chain is K(+)-insensitive pyrophosphate-energized proton pump, found in Rhodopseudomonas palustris (strain ATCC BAA-98 / CGA009).